The following is a 328-amino-acid chain: Glyoxylate reductase/hydroxypyruvate reductase (328 aa).

Position 36 is a phosphoserine (serine 36). 83-84 lines the substrate pocket; that stretch reads VG. Residues 162–164, 185–188, serine 217, and isoleucine 243 each bind NADP(+); these read GRI and RQPR. The substrate site is built by arginine 245 and aspartate 269. Serine 272 carries the phosphoserine modification. Histidine 293 acts as the Proton donor in catalysis. 293 to 296 contacts substrate; the sequence is HIGS. Residue glycine 295 coordinates NADP(+). Position 298 is a phosphothreonine (threonine 298).

It belongs to the D-isomer specific 2-hydroxyacid dehydrogenase family. As to quaternary structure, homodimer. In terms of tissue distribution, ubiquitous. Most abundantly expressed in the liver.

It carries out the reaction glycolate + NADP(+) = glyoxylate + NADPH + H(+). It catalyses the reaction (R)-glycerate + NAD(+) = 3-hydroxypyruvate + NADH + H(+). The enzyme catalyses (R)-glycerate + NADP(+) = 3-hydroxypyruvate + NADPH + H(+). In terms of biological role, enzyme with hydroxy-pyruvate reductase, glyoxylate reductase and D-glycerate dehydrogenase enzymatic activities. Reduces hydroxypyruvate to D-glycerate, glyoxylate to glycolate, oxidizes D-glycerate to hydroxypyruvate. The sequence is that of Glyoxylate reductase/hydroxypyruvate reductase (GRHPR) from Homo sapiens (Human).